The chain runs to 1133 residues: DNA-directed RNA polymerase subunit beta (1133 aa).

Positions 1085-1133 (ADVSSRHTPSRPTYESVTSEDLSPAAGGTFTLARRSREEDEDREEEDDF) are disordered. Polar residues predominate over residues 1090 to 1105 (RHTPSRPTYESVTSED). Over residues 1123–1133 (EDEDREEEDDF) the composition is skewed to acidic residues.

The protein belongs to the RNA polymerase beta chain family. As to quaternary structure, in cyanobacteria the RNAP catalytic core is composed of 2 alpha, 1 beta, 1 beta', 1 gamma and 1 omega subunit. When a sigma factor is associated with the core the holoenzyme is formed, which can initiate transcription.

It catalyses the reaction RNA(n) + a ribonucleoside 5'-triphosphate = RNA(n+1) + diphosphate. Functionally, DNA-dependent RNA polymerase catalyzes the transcription of DNA into RNA using the four ribonucleoside triphosphates as substrates. This is DNA-directed RNA polymerase subunit beta from Synechococcus sp. (strain JA-3-3Ab) (Cyanobacteria bacterium Yellowstone A-Prime).